A 589-amino-acid chain; its full sequence is Ectoderm-neural cortex protein 1 (589 aa).

Residues 46–114 (TDVLLHAGNR…AYSSRVIINE (69 aa)) form the BTB domain. 6 Kelch repeats span residues 296 to 340 (ALFL…AIGC), 341 to 388 (KVYI…ELKH), 389 to 444 (CLYV…SAKL), 446 to 492 (LFAF…VLGN), 494 to 538 (IFIM…ASGN), and 539 to 585 (KLYV…STWK).

As to quaternary structure, binds to RB1. Hypophosphorylated RB1 associates with ENC1 during neuronal differentiation, while hyperphosphorylated RB1 associates with ENC1 in undifferentiating cells. Part of a complex that contains CUL3, RBX1 and ENC1. Interacts indirectly with KEAP1. In terms of processing, ubiquitinated by E3 ubiquitin ligase complex formed by CUL3 and RBX1 and probably targeted for proteasome-independent degradation. Quinone-induced oxidative stress increases its ubiquitination. As to expression, primarily expressed in the nervous system.

The protein resides in the nucleus matrix. The protein localises to the cytoplasm. Its subcellular location is the cytoskeleton. Functionally, actin-binding protein involved in the regulation of neuronal process formation and in differentiation of neural crest cells. Down-regulates transcription factor NF2L2/NRF2 by decreasing the rate of protein synthesis and not via a ubiquitin-mediated proteasomal degradation mechanism. The sequence is that of Ectoderm-neural cortex protein 1 (Enc1) from Mus musculus (Mouse).